A 421-amino-acid chain; its full sequence is uncharacterized protein (421 aa).

This is an uncharacterized protein from Bacillus subtilis (strain 168).